The sequence spans 623 residues: Glutathione import ATP-binding protein GsiA (623 aa).

2 consecutive ABC transporter domains span residues 15 to 269 and 314 to 564; these read VENL…RALL and LRVR…RKLL. ATP is bound by residues 49–56 and 357–364; these read GESGSGKS.

The protein belongs to the ABC transporter superfamily. Glutathione importer (TC 3.A.1.5.11) family. The complex is composed of two ATP-binding proteins (GsiA), two transmembrane proteins (GsiC and GsiD) and a solute-binding protein (GsiB).

It is found in the cell inner membrane. The enzyme catalyses glutathione(out) + ATP + H2O = glutathione(in) + ADP + phosphate + H(+). In terms of biological role, part of the ABC transporter complex GsiABCD involved in glutathione import. Responsible for energy coupling to the transport system. The protein is Glutathione import ATP-binding protein GsiA of Escherichia coli O1:K1 / APEC.